A 181-amino-acid polypeptide reads, in one-letter code: Peptide deformylase (181 aa).

Cysteine 103 and histidine 145 together coordinate Fe cation. Glutamate 146 is an active-site residue. A Fe cation-binding site is contributed by histidine 149.

It belongs to the polypeptide deformylase family. Fe(2+) is required as a cofactor.

It carries out the reaction N-terminal N-formyl-L-methionyl-[peptide] + H2O = N-terminal L-methionyl-[peptide] + formate. Functionally, removes the formyl group from the N-terminal Met of newly synthesized proteins. Requires at least a dipeptide for an efficient rate of reaction. N-terminal L-methionine is a prerequisite for activity but the enzyme has broad specificity at other positions. This Orientia tsutsugamushi (strain Boryong) (Rickettsia tsutsugamushi) protein is Peptide deformylase.